Consider the following 79-residue polypeptide: Acyl carrier protein (79 aa).

A Carrier domain is found at 2-77 (SSIEERVKKI…QAVDYINKHL (76 aa)). An O-(pantetheine 4'-phosphoryl)serine modification is found at serine 37.

This sequence belongs to the acyl carrier protein (ACP) family. Post-translationally, 4'-phosphopantetheine is transferred from CoA to a specific serine of apo-ACP by AcpS. This modification is essential for activity because fatty acids are bound in thioester linkage to the sulfhydryl of the prosthetic group.

It localises to the cytoplasm. Its pathway is lipid metabolism; fatty acid biosynthesis. In terms of biological role, carrier of the growing fatty acid chain in fatty acid biosynthesis. The sequence is that of Acyl carrier protein from Alkalilimnicola ehrlichii (strain ATCC BAA-1101 / DSM 17681 / MLHE-1).